The chain runs to 839 residues: MSFFSRNINSKDRHKIQIISNSTAPSFEPNNEFVTSSCCCCGTILQHPKNISKFRCSVCYVTVVLQGTAFTQDKTELFDLDDMRELLSSCNNTYRELDKDEKRLRKHEVFHLLEDYIATRMVTIFPLNASFESSNPREMLDYDQVKEFYRILMELPTKKPFYSFLVACNELLKRPHVALNTPTPTNPKYKRIGLFRWILIILEVPIFKQTLANAEARCNTPHFRAISYEVLKKAVGYMSCLDEASAKELVHFLKYMQKDIFASKVELVNMYITFHFARILHTIGKETNNGKYSPQLEDFEHSEKLNPSLNQGSAKKLVHTNMNIFFGGIVRPMTSSANSKDILALNYRFSPEDYGNEWHIKTGARLLLCLYVANQSAYKCPVSNFYNTMIDFVDYKRDFELWQDLSKLSASHEKENSGSSGPRYSPVQFTICQCPFLFSLGMKISILEYETRRLMEYSAEQAFLKALDRKQVVDVYLKIRVRREFVTTDSLRSIQNQQKDLKKSLRIEFVNEPGIDAGGLRKEWFLLLTRDLFNPNNGLFVYVPESRLCWFSIMESIEHELLQGEGSSSELYYLFGVVLGLAIYNSTILDLKFPRAFYKKICGEVLSVNDFLELYPETGTNMLKMLEYDGEDFEDIFALTFETCFPDRFDESKIHYRQLCPDGSTQAVTRENKHEYFRLWMDFYLNRSIAPGFESFRNGFFHVIEGNSFRLFGSEELEQLVCGSNEQSLDVSMLRSVTRYQGGFDDNSPVVQWFWEILSEMEYPQQRKLLHFVTGSDRVPATGVTTIPFRISRIRSGADRLPLSHTCFNEICLHEYKDKETLRNKLIIALEESQGYGFR.

The region spanning 497-839 (QQKDLKKSLR…LEESQGYGFR (343 aa)) is the HECT domain. Cys-807 serves as the catalytic Glycyl thioester intermediate.

Belongs to the HUL4 family. In terms of assembly, component of the TRAMP complex.

It localises to the nucleus. It catalyses the reaction S-ubiquitinyl-[E2 ubiquitin-conjugating enzyme]-L-cysteine + [acceptor protein]-L-lysine = [E2 ubiquitin-conjugating enzyme]-L-cysteine + N(6)-ubiquitinyl-[acceptor protein]-L-lysine.. Its function is as follows. Probable E3 ubiquitin-protein ligase, component of the TRAMP complex which has a poly(A) RNA polymerase activity and is involved in a post-transcriptional quality control mechanism limiting inappropriate expression of genetic information. Polyadenylation is required for the degradative activity of the exosome on several of its nuclear RNA substrates. This chain is Probable E3 ubiquitin-protein ligase HUL4 (HUL4), found in Eremothecium gossypii (strain ATCC 10895 / CBS 109.51 / FGSC 9923 / NRRL Y-1056) (Yeast).